The following is a 686-amino-acid chain: MAM domain-containing protein 2 (686 aa).

Positions 1–18 (MLLRGVLLALQALQLAGA) are cleaved as a signal peptide. 4 consecutive MAM domains span residues 24–169 (GSCA…YCIE), 168–329 (IECD…HCQN), 340–498 (ASCN…SCSS), and 507–666 (GECT…PCGE). 2 N-linked (GlcNAc...) asparagine glycosylation sites follow: Asn134 and Asn329. Disordered regions lie at residues 521–543 (EKRNRSSWHRRRGETPTSYTGPK) and 665–686 (GEMEDTTQQSSGYSEDLNEIEY). Asn524 carries an N-linked (GlcNAc...) asparagine glycan.

O-glycosylated.

It is found in the secreted. It localises to the extracellular space. Its subcellular location is the extracellular matrix. The polypeptide is MAM domain-containing protein 2 (MAMDC2) (Homo sapiens (Human)).